We begin with the raw amino-acid sequence, 197 residues long: FMN-dependent NADH:quinone oxidoreductase (197 aa).

Ser10 contacts FMN.

The protein belongs to the azoreductase type 1 family. Homodimer. FMN is required as a cofactor.

It carries out the reaction 2 a quinone + NADH + H(+) = 2 a 1,4-benzosemiquinone + NAD(+). The enzyme catalyses N,N-dimethyl-1,4-phenylenediamine + anthranilate + 2 NAD(+) = 2-(4-dimethylaminophenyl)diazenylbenzoate + 2 NADH + 2 H(+). In terms of biological role, quinone reductase that provides resistance to thiol-specific stress caused by electrophilic quinones. Functionally, also exhibits azoreductase activity. Catalyzes the reductive cleavage of the azo bond in aromatic azo compounds to the corresponding amines. The polypeptide is FMN-dependent NADH:quinone oxidoreductase (Mycoplasma pneumoniae (strain ATCC 29342 / M129 / Subtype 1) (Mycoplasmoides pneumoniae)).